The sequence spans 332 residues: DNA-directed RNA polymerase subunit alpha (332 aa).

The alpha N-terminal domain (alpha-NTD) stretch occupies residues 1–230 (MKKITTSAYM…KQMSIFNNVL (230 aa)). The interval 246 to 332 (EHSKLLESVE…LRKKISELKS (87 aa)) is alpha C-terminal domain (alpha-CTD).

This sequence belongs to the RNA polymerase alpha chain family. Homodimer. The RNAP catalytic core consists of 2 alpha, 1 beta, 1 beta' and 1 omega subunit. When a sigma factor is associated with the core the holoenzyme is formed, which can initiate transcription.

It catalyses the reaction RNA(n) + a ribonucleoside 5'-triphosphate = RNA(n+1) + diphosphate. Its function is as follows. DNA-dependent RNA polymerase catalyzes the transcription of DNA into RNA using the four ribonucleoside triphosphates as substrates. The polypeptide is DNA-directed RNA polymerase subunit alpha (Campylobacter fetus subsp. fetus (strain 82-40)).